A 163-amino-acid chain; its full sequence is Photosystem II extrinsic protein V (163 aa).

A signal peptide spans 1-26 (MLKRSSWLAALLGLLTVVSTSTHTYA). Heme c-binding residues include Cys-63, Cys-66, His-67, and His-118.

It belongs to the cytochrome c family. PsbV subfamily. PSII is composed of 1 copy each of membrane proteins PsbA, PsbB, PsbC, PsbD, PsbE, PsbF, PsbH, PsbI, PsbJ, PsbK, PsbL, PsbM, PsbT, PsbY, PsbZ, Psb30/Ycf12, at least 3 peripheral proteins of the oxygen-evolving complex and a large number of cofactors. It forms dimeric complexes. The extrinsic subunits in red algae are PsbO (OEC33), PsbQ', cytochrome c-550 and PsbU. Heme c serves as cofactor.

The protein localises to the plastid. It localises to the chloroplast thylakoid membrane. In terms of biological role, one of the extrinsic, lumenal subunits of photosystem II (PSII). PSII is a light-driven water plastoquinone oxidoreductase, using light energy to abstract electrons from H(2)O, generating a proton gradient subsequently used for ATP formation. The extrinsic proteins stabilize the structure of photosystem II oxygen-evolving complex (OEC), the ion environment of oxygen evolution and protect the OEC against heat-induced inactivation. This Pyropia yezoensis (Susabi-nori) protein is Photosystem II extrinsic protein V.